The sequence spans 81 residues: Putative phytosulfokines 6 (81 aa).

The signal sequence occupies residues 1-20; that stretch reads MKQSLCLAVLFLILSTSSSA. Residues 21–72 constitute a propeptide that is removed on maturation; it reads IRRGKEDQEINPLVSATSVEEDSVNKLMGMEYCGEGDEECLRRRMMTESHLD. 2 positions are modified to sulfotyrosine: tyrosine 73 and tyrosine 75. A propeptide spanning residues 78 to 81 is cleaved from the precursor; the sequence is HHKH.

Belongs to the phytosulfokine family. In terms of processing, sulfation is important for activity and for the binding to a putative membrane receptor. Post-translationally, PSK-beta is an enzymatic derivative of PSK-alpha. In terms of tissue distribution, expressed in roots, leaves, stems, flowers and siliques. Most abundant in vascular bundles and in root tips.

The protein localises to the secreted. Promotes plant cell differentiation, organogenesis and somatic embryogenesis as well as cell proliferation. In Arabidopsis thaliana (Mouse-ear cress), this protein is Putative phytosulfokines 6 (PSK6).